We begin with the raw amino-acid sequence, 426 residues long: Serine hydroxymethyltransferase (426 aa).

(6S)-5,6,7,8-tetrahydrofolate is bound by residues Leu-118 and 122–124; that span reads GHL. Residue Lys-227 is modified to N6-(pyridoxal phosphate)lysine. Residues 342–368 form a disordered region; it reads NTIPNDPKPPTQASGIRLGTPAMTTRG.

This sequence belongs to the SHMT family. In terms of assembly, homodimer. Pyridoxal 5'-phosphate is required as a cofactor.

Its subcellular location is the cytoplasm. The catalysed reaction is (6R)-5,10-methylene-5,6,7,8-tetrahydrofolate + glycine + H2O = (6S)-5,6,7,8-tetrahydrofolate + L-serine. It functions in the pathway one-carbon metabolism; tetrahydrofolate interconversion. It participates in amino-acid biosynthesis; glycine biosynthesis; glycine from L-serine: step 1/1. Functionally, catalyzes the reversible interconversion of serine and glycine with tetrahydrofolate (THF) serving as the one-carbon carrier. This reaction serves as the major source of one-carbon groups required for the biosynthesis of purines, thymidylate, methionine, and other important biomolecules. Also exhibits THF-independent aldolase activity toward beta-hydroxyamino acids, producing glycine and aldehydes, via a retro-aldol mechanism. The sequence is that of Serine hydroxymethyltransferase from Thermomicrobium roseum (strain ATCC 27502 / DSM 5159 / P-2).